We begin with the raw amino-acid sequence, 321 residues long: UPF0676 protein C1494.01 (321 aa).

The region spanning 159–267 is the Fe2OG dioxygenase domain; it reads EEDVLRLLKY…RQTIAYFVTP (109 aa).

Belongs to the UPF0676 family.

Its subcellular location is the cytoplasm. It is found in the nucleus. The polypeptide is UPF0676 protein C1494.01 (Schizosaccharomyces pombe (strain 972 / ATCC 24843) (Fission yeast)).